The primary structure comprises 273 residues: Shikimate kinase (273 aa).

Residue 85–95 (PVGKGLKSSSA) participates in ATP binding.

This sequence belongs to the GHMP kinase family. Archaeal shikimate kinase subfamily.

The protein localises to the cytoplasm. The enzyme catalyses shikimate + ATP = 3-phosphoshikimate + ADP + H(+). It participates in metabolic intermediate biosynthesis; chorismate biosynthesis; chorismate from D-erythrose 4-phosphate and phosphoenolpyruvate: step 5/7. This is Shikimate kinase from Pyrococcus furiosus (strain ATCC 43587 / DSM 3638 / JCM 8422 / Vc1).